A 97-amino-acid chain; its full sequence is Aspartyl/glutamyl-tRNA(Asn/Gln) amidotransferase subunit C (97 aa).

The segment at 68–97 is disordered; the sequence is ETGFTQEEALSNAPQQSQGQFRTPKVVESA. Residues 70-88 are compositionally biased toward polar residues; the sequence is GFTQEEALSNAPQQSQGQF.

This sequence belongs to the GatC family. In terms of assembly, heterotrimer of A, B and C subunits.

The enzyme catalyses L-glutamyl-tRNA(Gln) + L-glutamine + ATP + H2O = L-glutaminyl-tRNA(Gln) + L-glutamate + ADP + phosphate + H(+). It carries out the reaction L-aspartyl-tRNA(Asn) + L-glutamine + ATP + H2O = L-asparaginyl-tRNA(Asn) + L-glutamate + ADP + phosphate + 2 H(+). Allows the formation of correctly charged Asn-tRNA(Asn) or Gln-tRNA(Gln) through the transamidation of misacylated Asp-tRNA(Asn) or Glu-tRNA(Gln) in organisms which lack either or both of asparaginyl-tRNA or glutaminyl-tRNA synthetases. The reaction takes place in the presence of glutamine and ATP through an activated phospho-Asp-tRNA(Asn) or phospho-Glu-tRNA(Gln). This chain is Aspartyl/glutamyl-tRNA(Asn/Gln) amidotransferase subunit C, found in Akkermansia muciniphila (strain ATCC BAA-835 / DSM 22959 / JCM 33894 / BCRC 81048 / CCUG 64013 / CIP 107961 / Muc).